Consider the following 103-residue polypeptide: Large ribosomal subunit protein bL21 (103 aa).

This sequence belongs to the bacterial ribosomal protein bL21 family. Part of the 50S ribosomal subunit. Contacts protein L20.

This protein binds to 23S rRNA in the presence of protein L20. The polypeptide is Large ribosomal subunit protein bL21 (Shewanella sp. (strain MR-7)).